The following is a 155-amino-acid chain: Fibroblast growth factor 1 (155 aa).

Ala2 carries the N-acetylalanine modification. Residues 2–15 (AEGETTTFRALTEK) constitute a propeptide that is removed on maturation. Residue Asn33 coordinates heparin. The tract at residues 127 to 143 (KKNGSSKLGPRTHFGQK) is heparin-binding.

Belongs to the heparin-binding growth factors family. In terms of assembly, monomer. Homodimer. Interacts with FGFR1, FGFR2, FGFR3 and FGFR4. Affinity between fibroblast growth factors (FGFs) and their receptors is increased by heparan sulfate glycosaminoglycans that function as coreceptors. Found in a complex with FGFBP1, FGF1 and FGF2. Interacts with FGFBP1. Part of a Cu(2+)-dependent multiprotein aggregate containing FGF1, S100A13 and SYT1. Interacts with SYT1. Interacts with S100A13. Interacts with LRRC59. Interacts with CSNKA, CSNKB and FIBP. While binding with LRRC59, CSNKA and FIBP seem mutually exclusive, CSNKB and FIBP may cooperatively interact with FGF1. Forms a ternary complex with FGFR1 and ITGAV:ITGB3 and induces the recruitment of PTPN11 to the complex. In the nucleus, phosphorylated by PKC/PRKCD.

It is found in the secreted. Its subcellular location is the cytoplasm. It localises to the cell cortex. The protein localises to the cytosol. The protein resides in the nucleus. In terms of biological role, plays an important role in the regulation of cell survival, cell division, angiogenesis, cell differentiation and cell migration. Functions as a potent mitogen in vitro. Acts as a ligand for FGFR1 and integrins. Binds to FGFR1 in the presence of heparin leading to FGFR1 dimerization and activation via sequential autophosphorylation on tyrosine residues which act as docking sites for interacting proteins, leading to the activation of several signaling cascades. Binds to integrin ITGAV:ITGB3. Its binding to integrin, subsequent ternary complex formation with integrin and FGFR1, and the recruitment of PTPN11 to the complex are essential for FGF1 signaling. Induces the phosphorylation and activation of FGFR1, FRS2, MAPK3/ERK1, MAPK1/ERK2 and AKT1. Can induce angiogenesis. The sequence is that of Fibroblast growth factor 1 (FGF1) from Ovis aries (Sheep).